The sequence spans 351 residues: MRIEEDIKLGFKDVLIRPKRSILKSRSQVDLTRLFIFKHAQNKWSGIPLIAANMDTVGTFKMAIALSSFGILTAIHKYYSYLDWKKFIHTIPGTVVKHIMVSTGMLDEDFVKLKQILSLSSKLKYICIDVANGYSEKFVTFLKKVRECYCDKIICAGNVVTGEMVEELILSGADIVKVGIGPGSVCTTRAKTAIGYPQLSAVIECSDAAHGLGGQIISDGGCVVSGDIAKAFGGGADFVMLGGMLAGHKECEGLIFKENKKRYMIFYGMSSKFAMDRHIGGVARYKTPEGKTVKVLFRGAVSETINNILGGLRSTCTYVGAFTLKELTKRTTFIKVSEQENIIFNNQEVSN.

E108–A131 is a binding site for NADP(+). The K(+) site is built by G181 and G183. C186 (thioimidate intermediate) is an active-site residue. I216 to V239 contributes to the NADP(+) binding site.

This sequence belongs to the IMPDH/GMPR family. GuaC type 1 subfamily. In terms of assembly, homotetramer.

The catalysed reaction is IMP + NH4(+) + NADP(+) = GMP + NADPH + 2 H(+). Its function is as follows. Catalyzes the irreversible NADPH-dependent deamination of GMP to IMP. It functions in the conversion of nucleobase, nucleoside and nucleotide derivatives of G to A nucleotides, and in maintaining the intracellular balance of A and G nucleotides. This chain is GMP reductase (guaC), found in Buchnera aphidicola subsp. Baizongia pistaciae (strain Bp).